Consider the following 382-residue polypeptide: ATP phosphoribosyltransferase regulatory subunit (382 aa).

It belongs to the class-II aminoacyl-tRNA synthetase family. HisZ subfamily. In terms of assembly, heteromultimer composed of HisG and HisZ subunits.

It localises to the cytoplasm. It functions in the pathway amino-acid biosynthesis; L-histidine biosynthesis; L-histidine from 5-phospho-alpha-D-ribose 1-diphosphate: step 1/9. Functionally, required for the first step of histidine biosynthesis. May allow the feedback regulation of ATP phosphoribosyltransferase activity by histidine. The sequence is that of ATP phosphoribosyltransferase regulatory subunit from Burkholderia ambifaria (strain ATCC BAA-244 / DSM 16087 / CCUG 44356 / LMG 19182 / AMMD) (Burkholderia cepacia (strain AMMD)).